The following is a 487-amino-acid chain: Protein nucleotidyltransferase YdiU (487 aa).

Residues Gly92, Arg95, Lys106, Asp118, Gly119, Arg169, and Arg176 each contribute to the ATP site. The active-site Proton acceptor is the Asp253. 2 residues coordinate Mg(2+): Asn254 and Asp263. An ATP-binding site is contributed by Asp263.

This sequence belongs to the SELO family. Requires Mg(2+) as cofactor. The cofactor is Mn(2+).

It catalyses the reaction L-seryl-[protein] + ATP = 3-O-(5'-adenylyl)-L-seryl-[protein] + diphosphate. It carries out the reaction L-threonyl-[protein] + ATP = 3-O-(5'-adenylyl)-L-threonyl-[protein] + diphosphate. The catalysed reaction is L-tyrosyl-[protein] + ATP = O-(5'-adenylyl)-L-tyrosyl-[protein] + diphosphate. The enzyme catalyses L-histidyl-[protein] + UTP = N(tele)-(5'-uridylyl)-L-histidyl-[protein] + diphosphate. It catalyses the reaction L-seryl-[protein] + UTP = O-(5'-uridylyl)-L-seryl-[protein] + diphosphate. It carries out the reaction L-tyrosyl-[protein] + UTP = O-(5'-uridylyl)-L-tyrosyl-[protein] + diphosphate. Nucleotidyltransferase involved in the post-translational modification of proteins. It can catalyze the addition of adenosine monophosphate (AMP) or uridine monophosphate (UMP) to a protein, resulting in modifications known as AMPylation and UMPylation. This Bordetella pertussis (strain Tohama I / ATCC BAA-589 / NCTC 13251) protein is Protein nucleotidyltransferase YdiU.